Consider the following 407-residue polypeptide: MKYDNLLDRFIKYVKVNTRSDPDSETTPSTESQEAFALTILKPEMEAIGLQDVHYNPVNGYLIGTLPANNPTLTRKIGFIAHMDTADFNAENVNPQIIDNYQGGDITLGSSNYKLDPKAFPNLNNYIGQTLITTDGTTLLGADDKSGIAEIMTAIEFLTSQPQIEHCDIKVAFGPDEEIGVGADKFEVADFEVDFAYTMDGGPLGELQYETFSAAALEVTFLGRNVHPGTAKDQMINALELAIDFHEKLPAKERPEYTDGYQGFYHLTGLTGTVEEARASYIIRDFEEASFEARKVKVENIAQSMNAHLGTKRVLVELNDQYYNMKKVIEKDMTAIELAKEVMEELAIKPVIEPIRGGTDGSKISFMGIPTPNIFAGGENMHGRFEFVSLQTMERAVDVIIGLVCKA.

Residue histidine 82 coordinates Zn(2+). Residue aspartate 84 is part of the active site. Aspartate 143 provides a ligand contact to Zn(2+). The Proton acceptor role is filled by glutamate 177. Zn(2+)-binding residues include glutamate 178, aspartate 200, and histidine 382.

Belongs to the peptidase M20B family. It depends on Zn(2+) as a cofactor.

Its subcellular location is the cytoplasm. It carries out the reaction Release of the N-terminal residue from a tripeptide.. Its function is as follows. Cleaves the N-terminal amino acid of tripeptides. This is Peptidase T from Streptococcus pyogenes serotype M12 (strain MGAS2096).